Consider the following 239-residue polypeptide: Fatty acid metabolism regulator protein (239 aa).

One can recognise an HTH gntR-type domain in the interval 6–74 (QSPAGFAEEY…HGKPTKINNF (69 aa)). The H-T-H motif DNA-binding region spans 34–53 (ERELSELIGVTRTTLREVLQ).

As to quaternary structure, homodimer.

It localises to the cytoplasm. Functionally, multifunctional regulator of fatty acid metabolism. This is Fatty acid metabolism regulator protein from Pectobacterium carotovorum subsp. carotovorum (strain PC1).